The following is a 609-amino-acid chain: Manganese lipoxygenase (609 aa).

A signal peptide spans 1 to 16; sequence MRLLLSIAGLTTVVNA. N24, N115, N156, and N193 each carry an N-linked (GlcNAc...) asparagine glycan. The Lipoxygenase domain occupies 117–609; the sequence is SLKAIQDHGG…PGVIPFYLSV (493 aa). Positions 289 and 294 each coordinate Mn(2+). N385 carries an N-linked (GlcNAc...) asparagine glycan. Mn(2+) contacts are provided by H474 and N478. N-linked (GlcNAc...) asparagine glycosylation is present at N539. V609 is a Mn(2+) binding site.

Belongs to the lipoxygenase family. Manganese lipoxygenase subfamily. It depends on Mn(2+) as a cofactor. N- and O-glycosylated.

The protein localises to the secreted. It catalyses the reaction (9Z,12Z)-octadecadienoate + O2 = (9S)-hydroperoxy-(10E,12Z)-octadecadienoate. The catalysed reaction is (9Z,12Z)-octadecadienoate + O2 = (11S)-hydroperoxy-(9Z,12Z)-octadecadienoate. It carries out the reaction (9Z,12Z)-octadecadienoate + O2 = (13R)-hydroperoxy-(9Z,11E)-octadecadienoate. The enzyme catalyses (9Z,12Z,15Z)-octadecatrienoate + O2 = (11R)-hydroperoxy-(9Z,12Z,15Z)-octadecatrienoate. Its function is as follows. Lipoxygenase that metabolizes linoleic and alpha-linolenic acids to 9-, 11- and 13-hydroperoxy fatty acids. Oxidizes linoleic acid to mainly 9S- and 13R-HPODE and alpha-linolenic acid to 11R-HPOTrE. In Colletotrichum gloeosporioides (strain Cg-14) (Anthracnose fungus), this protein is Manganese lipoxygenase.